A 285-amino-acid chain; its full sequence is Bifunctional protein FolD (285 aa).

NADP(+)-binding positions include 165 to 167, S190, and I231; that span reads GRS.

The protein belongs to the tetrahydrofolate dehydrogenase/cyclohydrolase family. Homodimer.

It catalyses the reaction (6R)-5,10-methylene-5,6,7,8-tetrahydrofolate + NADP(+) = (6R)-5,10-methenyltetrahydrofolate + NADPH. The catalysed reaction is (6R)-5,10-methenyltetrahydrofolate + H2O = (6R)-10-formyltetrahydrofolate + H(+). Its pathway is one-carbon metabolism; tetrahydrofolate interconversion. Functionally, catalyzes the oxidation of 5,10-methylenetetrahydrofolate to 5,10-methenyltetrahydrofolate and then the hydrolysis of 5,10-methenyltetrahydrofolate to 10-formyltetrahydrofolate. The protein is Bifunctional protein FolD of Magnetococcus marinus (strain ATCC BAA-1437 / JCM 17883 / MC-1).